The sequence spans 501 residues: L-arabinose isomerase (501 aa).

Glu306, Glu333, His350, and His450 together coordinate Mn(2+).

Belongs to the arabinose isomerase family. As to quaternary structure, homohexamer. The cofactor is Mn(2+).

It catalyses the reaction beta-L-arabinopyranose = L-ribulose. The protein operates within carbohydrate degradation; L-arabinose degradation via L-ribulose; D-xylulose 5-phosphate from L-arabinose (bacterial route): step 1/3. Functionally, catalyzes the conversion of L-arabinose to L-ribulose. The chain is L-arabinose isomerase from Pectobacterium carotovorum subsp. carotovorum (strain PC1).